Here is an 82-residue protein sequence, read N- to C-terminus: Cytochrome b559 subunit alpha (82 aa).

Residues Val-21–Trp-35 traverse the membrane as a helical segment. A heme-binding site is contributed by His-23.

This sequence belongs to the PsbE/PsbF family. In terms of assembly, heterodimer of an alpha subunit and a beta subunit. PSII is composed of 1 copy each of membrane proteins PsbA, PsbB, PsbC, PsbD, PsbE, PsbF, PsbH, PsbI, PsbJ, PsbK, PsbL, PsbM, PsbT, PsbX, PsbY, PsbZ, Psb30/Ycf12, peripheral proteins PsbO, CyanoQ (PsbQ), PsbU, PsbV and a large number of cofactors. It forms dimeric complexes. It depends on heme b as a cofactor.

It localises to the cellular thylakoid membrane. This b-type cytochrome is tightly associated with the reaction center of photosystem II (PSII). PSII is a light-driven water:plastoquinone oxidoreductase that uses light energy to abstract electrons from H(2)O, generating O(2) and a proton gradient subsequently used for ATP formation. It consists of a core antenna complex that captures photons, and an electron transfer chain that converts photonic excitation into a charge separation. The polypeptide is Cytochrome b559 subunit alpha (Nostoc sp. (strain PCC 7120 / SAG 25.82 / UTEX 2576)).